The primary structure comprises 462 residues: Probable Xaa-Pro aminopeptidase NECHADRAFT_60613 (462 aa).

The Mn(2+) site is built by aspartate 259, aspartate 270, glutamate 393, and glutamate 433.

Belongs to the peptidase M24B family. The cofactor is Mn(2+).

The enzyme catalyses Release of any N-terminal amino acid, including proline, that is linked to proline, even from a dipeptide or tripeptide.. Functionally, catalyzes the removal of a penultimate prolyl residue from the N-termini of peptides. This Fusarium vanettenii (strain ATCC MYA-4622 / CBS 123669 / FGSC 9596 / NRRL 45880 / 77-13-4) (Fusarium solani subsp. pisi) protein is Probable Xaa-Pro aminopeptidase NECHADRAFT_60613.